Here is a 714-residue protein sequence, read N- to C-terminus: Interferon-induced GTP-binding protein Mx2 (714 aa).

The tract at residues 1–89 (MSMSYRALKF…QRSKGSENNL (89 aa)) is disordered. 2 stretches are compositionally biased toward polar residues: residues 61-70 (NNFNQLNLDP) and 79-88 (QQRSKGSENN). The 272-residue stretch at 115–386 (DLALPAIAVI…LIWHINKSLP (272 aa)) folds into the Dynamin-type G domain. The G1 motif stretch occupies residues 125-132 (GDQSSGKS). 125-132 (GDQSSGKS) lines the GTP pocket. The tract at residues 150–152 (ITR) is G2 motif. The interval 224–227 (DLPG) is G3 motif. GTP-binding positions include 224-228 (DLPGI) and 293-296 (TKPD). Residues 293–296 (TKPD) form a G4 motif region. The G5 motif stretch occupies residues 325–328 (KCRG). One can recognise a GED domain in the interval 622-713 (IVEIGVHLNA…ALYEFPHFKS (92 aa)).

The protein belongs to the TRAFAC class dynamin-like GTPase superfamily. Dynamin/Fzo/YdjA family.

It is found in the cytoplasm. The protein resides in the nucleus. Interferon-induced dynamin-like GTPase with antiviral activity. The chain is Interferon-induced GTP-binding protein Mx2 (MX2) from Ovis aries (Sheep).